A 280-amino-acid polypeptide reads, in one-letter code: uncharacterized protein (280 aa).

The 113-residue stretch at 96-208 folds into the DUF1279 domain; sequence DKSIGIFQRF…GYLSTPPPVK (113 aa). The chain crosses the membrane as a helical span at residues 115 to 135; sequence VMVPVHIVTSTVWFGSFYYAA. Residues 207 to 274 adopt a coiled-coil conformation; sequence VKEFLQDKME…KLQETKDKMS (68 aa). The interval 245–280 is disordered; that stretch reads SERMEETKERFSETKDKFSEKLQETKDKMSFRKKAD.

It localises to the membrane. This is an uncharacterized protein from Danio rerio (Zebrafish).